A 471-amino-acid polypeptide reads, in one-letter code: MKIKTRFAPSPTGYLHVGGARTALYSWLFARHHGGEFVLRIEDTDLERSTPEAIEAIMDGMNWLNLEWDEGPYFQTKRFERYNAVIDEMLEAGTAYKCYCSKERLEQLREEQMAKGEKPRYDGRCRHSHEHHDDDEPCVVRFANPQDGSVIFDDQIRGPIEFSNQELDDLIIRRTDGSPTYNFCVVVDDWDMEITHVIRGEDHINNTPRQINILKALNAPVPMYAHVSMINGDDGKKLSKRHGAVSVMQYRDDGYLPEALLNYLVRLGWSSGDQEIFTREEMIKLFSLGAVSKSASAFNTDKLLWLNHHYINTLAPEYVATHLQWHIEQENIDTRNGPQLAELVKLLGERCKTLKEMAQSCRYFYEDFSEFDADAAKKHLRPVARQPLEVVRDKLSAITDWSAENVHHAIQATADELEVGMGKVGMPLRVAVTGAGQSPALDVTVHAIGKTRSIERINKALGFIAERESQQ.

The short motif at 9 to 19 (PSPTGYLHVGG) is the 'HIGH' region element. The Zn(2+) site is built by Cys-98, Cys-100, Cys-125, and His-127. The 'KMSKS' region signature appears at 237-241 (KLSKR). Lys-240 lines the ATP pocket.

The protein belongs to the class-I aminoacyl-tRNA synthetase family. Glutamate--tRNA ligase type 1 subfamily. In terms of assembly, monomer. It depends on Zn(2+) as a cofactor.

The protein resides in the cytoplasm. It carries out the reaction tRNA(Glu) + L-glutamate + ATP = L-glutamyl-tRNA(Glu) + AMP + diphosphate. Catalyzes the attachment of glutamate to tRNA(Glu) in a two-step reaction: glutamate is first activated by ATP to form Glu-AMP and then transferred to the acceptor end of tRNA(Glu). The sequence is that of Glutamate--tRNA ligase from Salmonella choleraesuis (strain SC-B67).